Consider the following 116-residue polypeptide: Small ribosomal subunit protein uS13 (116 aa).

The interval Arg92–Arg116 is disordered. Over residues Ala106–Arg116 the composition is skewed to basic residues.

This sequence belongs to the universal ribosomal protein uS13 family. As to quaternary structure, part of the 30S ribosomal subunit. Forms a loose heterodimer with protein S19. Forms two bridges to the 50S subunit in the 70S ribosome.

Its function is as follows. Located at the top of the head of the 30S subunit, it contacts several helices of the 16S rRNA. In the 70S ribosome it contacts the 23S rRNA (bridge B1a) and protein L5 of the 50S subunit (bridge B1b), connecting the 2 subunits; these bridges are implicated in subunit movement. Contacts the tRNAs in the A and P-sites. The chain is Small ribosomal subunit protein uS13 from Lactobacillus acidophilus (strain ATCC 700396 / NCK56 / N2 / NCFM).